Reading from the N-terminus, the 87-residue chain is UPF0335 protein RHECIAT_CH0003797 (87 aa).

Belongs to the UPF0335 family.

The polypeptide is UPF0335 protein RHECIAT_CH0003797 (Rhizobium etli (strain CIAT 652)).